A 116-amino-acid chain; its full sequence is Large ribosomal subunit protein bL20 (116 aa).

Belongs to the bacterial ribosomal protein bL20 family.

Binds directly to 23S ribosomal RNA and is necessary for the in vitro assembly process of the 50S ribosomal subunit. It is not involved in the protein synthesizing functions of that subunit. The sequence is that of Large ribosomal subunit protein bL20 from Picosynechococcus sp. (strain ATCC 27264 / PCC 7002 / PR-6) (Agmenellum quadruplicatum).